The primary structure comprises 251 residues: 2,3-bisphosphoglycerate-dependent phosphoglycerate mutase (251 aa).

Residues 8-15 (RHGESLWN), 21-22 (TG), arginine 60, 87-90 (ERHY), lysine 98, 114-115 (RR), and 183-184 (GN) contribute to the substrate site. Histidine 9 serves as the catalytic Tele-phosphohistidine intermediate. Glutamate 87 serves as the catalytic Proton donor/acceptor.

It belongs to the phosphoglycerate mutase family. BPG-dependent PGAM subfamily.

The enzyme catalyses (2R)-2-phosphoglycerate = (2R)-3-phosphoglycerate. It participates in carbohydrate degradation; glycolysis; pyruvate from D-glyceraldehyde 3-phosphate: step 3/5. Functionally, catalyzes the interconversion of 2-phosphoglycerate and 3-phosphoglycerate. This is 2,3-bisphosphoglycerate-dependent phosphoglycerate mutase from Thermoanaerobacter pseudethanolicus (strain ATCC 33223 / 39E) (Clostridium thermohydrosulfuricum).